The following is a 137-amino-acid chain: Small ribosomal subunit protein uS9 (137 aa).

Belongs to the universal ribosomal protein uS9 family.

This is Small ribosomal subunit protein uS9 (rps9) from Sulfurisphaera tokodaii (strain DSM 16993 / JCM 10545 / NBRC 100140 / 7) (Sulfolobus tokodaii).